Reading from the N-terminus, the 303-residue chain is Probable cell division protein WhiA (303 aa).

The segment at residues 272 to 303 (SIQQLADSLSTPLTKSGVNHRLRKINKIADEL) is a DNA-binding region (H-T-H motif).

Belongs to the WhiA family.

Its function is as follows. Involved in cell division and chromosome segregation. In Streptococcus pneumoniae (strain ATCC 700669 / Spain 23F-1), this protein is Probable cell division protein WhiA.